We begin with the raw amino-acid sequence, 139 residues long: Large ribosomal subunit protein bL17 (139 aa).

Residues 120–139 (ESAKGQDSGPVHVEGDEEAA) form a disordered region.

The protein belongs to the bacterial ribosomal protein bL17 family. In terms of assembly, part of the 50S ribosomal subunit. Contacts protein L32.

In Parvibaculum lavamentivorans (strain DS-1 / DSM 13023 / NCIMB 13966), this protein is Large ribosomal subunit protein bL17.